The sequence spans 235 residues: MAKLGKRLKKAVSTVDRDKFYALDEAVKTVRSNATAKFDETVEIAMNLGIDPRHADQMVRGMVQLPNGTGKTVRVAVFARAGKADEALAAGADIVGAEDLADKIQAGEFNFDRCIATPDMMGVVGRLGKILGPRGLMPNPKLGTVTPNVAEAVKAAKGGAVEFRAEKTGIVHAGVGKASFSEQALEENIRAFVSAINRAKPSGAKGTYIEKVSLSSTMGPGIKLDIPALVASLGG.

The protein belongs to the universal ribosomal protein uL1 family. As to quaternary structure, part of the 50S ribosomal subunit.

Functionally, binds directly to 23S rRNA. The L1 stalk is quite mobile in the ribosome, and is involved in E site tRNA release. Protein L1 is also a translational repressor protein, it controls the translation of the L11 operon by binding to its mRNA. In Rhodospirillum centenum (strain ATCC 51521 / SW), this protein is Large ribosomal subunit protein uL1.